The sequence spans 158 residues: Lipoprotein signal peptidase (158 aa).

3 helical membrane passes run 12–32, 46–66, and 71–91; these read LFWWVAGLALASDRLTKAWIV, IIPGVFHITYVTNTGAAFSLF, and IWLRWLSLIVSLGLITWAILG. Catalysis depends on residues Asp124 and Asp140. Residues 135 to 155 form a helical membrane-spanning segment; that stretch reads VFNVADIAINIGIVCLLWSAW.

It belongs to the peptidase A8 family.

It is found in the cell inner membrane. It carries out the reaction Release of signal peptides from bacterial membrane prolipoproteins. Hydrolyzes -Xaa-Yaa-Zaa-|-(S,diacylglyceryl)Cys-, in which Xaa is hydrophobic (preferably Leu), and Yaa (Ala or Ser) and Zaa (Gly or Ala) have small, neutral side chains.. The protein operates within protein modification; lipoprotein biosynthesis (signal peptide cleavage). Functionally, this protein specifically catalyzes the removal of signal peptides from prolipoproteins. This is Lipoprotein signal peptidase from Thermosynechococcus vestitus (strain NIES-2133 / IAM M-273 / BP-1).